The primary structure comprises 101 residues: Chaperone modulatory protein CbpM (101 aa).

Belongs to the CbpM family.

In terms of biological role, interacts with CbpA and inhibits both the DnaJ-like co-chaperone activity and the DNA binding activity of CbpA. Together with CbpA, modulates the activity of the DnaK chaperone system. Does not inhibit the co-chaperone activity of DnaJ. The chain is Chaperone modulatory protein CbpM from Salmonella arizonae (strain ATCC BAA-731 / CDC346-86 / RSK2980).